We begin with the raw amino-acid sequence, 245 residues long: 1-(5-phosphoribosyl)-5-[(5-phosphoribosylamino)methylideneamino] imidazole-4-carboxamide isomerase (245 aa).

The active-site Proton acceptor is aspartate 8. Catalysis depends on aspartate 129, which acts as the Proton donor.

It belongs to the HisA/HisF family.

Its subcellular location is the cytoplasm. The enzyme catalyses 1-(5-phospho-beta-D-ribosyl)-5-[(5-phospho-beta-D-ribosylamino)methylideneamino]imidazole-4-carboxamide = 5-[(5-phospho-1-deoxy-D-ribulos-1-ylimino)methylamino]-1-(5-phospho-beta-D-ribosyl)imidazole-4-carboxamide. It participates in amino-acid biosynthesis; L-histidine biosynthesis; L-histidine from 5-phospho-alpha-D-ribose 1-diphosphate: step 4/9. The protein is 1-(5-phosphoribosyl)-5-[(5-phosphoribosylamino)methylideneamino] imidazole-4-carboxamide isomerase of Sinorhizobium fredii (strain NBRC 101917 / NGR234).